Here is a 228-residue protein sequence, read N- to C-terminus: Protein slowmo homolog (228 aa).

The 172-residue stretch at 1-172 (MPLFETIKHT…TIIKVQKEAE (172 aa)) folds into the PRELI/MSF1 domain.

It belongs to the slowmo family.

The sequence is that of Protein slowmo homolog (slmo) from Dictyostelium discoideum (Social amoeba).